Here is a 799-residue protein sequence, read N- to C-terminus: Protein phosphatase 1 regulatory subunit 3F (799 aa).

Positions 1-30 (MARTAPVEPPLRHPAPPSPAAGEPRASAEA) are disordered. Residues 1–772 (MARTAPVEPP…LTQTLGVLAG (772 aa)) lie on the Cytoplasmic side of the membrane. The segment covering 7-19 (VEPPLRHPAPPSP) has biased composition (pro residues). At S18 the chain carries Phosphoserine. Over residues 20–30 (AAGEPRASAEA) the composition is skewed to low complexity. The PP1-binding motif signature appears at 36–39 (RVLF). Disordered stretches follow at residues 53–108 (RYRP…PVPA), 201–235 (SPPG…SPDD), 332–353 (RRRP…LAEH), and 417–439 (ATCG…DRAA). The segment covering 78–97 (ADEEDDGEDGDEGEEEEEAF) has biased composition (acidic residues). One can recognise a CBM21 domain in the interval 127–283 (LERLGRVMVE…NNHGRNYTVL (157 aa)). A compositionally biased stretch (basic and acidic residues) spans 334 to 353 (RPFEEEPRMRSADDNTLAEH). At S545 the chain carries Phosphoserine. 3 disordered regions span residues 566-600 (KDTE…PPEI), 663-688 (SKSP…SWVP), and 722-743 (PHVN…KRSP). Positions 569–579 (EDPDDEGEGED) are enriched in acidic residues. A compositionally biased stretch (low complexity) spans 585–594 (PSSPEGGSPK). Phosphoserine is present on residues S587 and S592. Over residues 679–688 (PTERESSWVP) the composition is skewed to basic and acidic residues. Residues 773–793 (LVMVPVALNSGVSLLVLVLCL) form a helical membrane-spanning segment. Residues 794–799 (SLAWFS) are Extracellular-facing.

Highly expressed in brain (at protein level).

Its subcellular location is the membrane. Its function is as follows. Glycogen-targeting subunit for protein phosphatase 1 (PP1). The chain is Protein phosphatase 1 regulatory subunit 3F (Ppp1r3f) from Mus musculus (Mouse).